The sequence spans 89 residues: Glutamyl-tRNA(Gln) amidotransferase subunit C (89 aa).

The protein belongs to the GatC family. Heterotrimer of A, B and C subunits.

It catalyses the reaction L-glutamyl-tRNA(Gln) + L-glutamine + ATP + H2O = L-glutaminyl-tRNA(Gln) + L-glutamate + ADP + phosphate + H(+). It carries out the reaction L-aspartyl-tRNA(Asn) + L-glutamine + ATP + H2O = L-asparaginyl-tRNA(Asn) + L-glutamate + ADP + phosphate + 2 H(+). Allows the formation of correctly charged Asn-tRNA(Asn) or Gln-tRNA(Gln) through the transamidation of misacylated Asp-tRNA(Asn) or Glu-tRNA(Gln) in organisms which lack either or both of asparaginyl-tRNA or glutaminyl-tRNA synthetases. The reaction takes place in the presence of glutamine and ATP through an activated phospho-Asp-tRNA(Asn) or phospho-Glu-tRNA(Gln). This Thermus thermophilus (strain ATCC 27634 / DSM 579 / HB8) protein is Glutamyl-tRNA(Gln) amidotransferase subunit C.